The sequence spans 885 residues: Putative membrane protein YdgH (885 aa).

7 helical membrane-spanning segments follow: residues 9-29 (WAIA…SPNL), 181-201 (IIGL…PIVV), 202-222 (VGFS…NVDF), 227-247 (FTQT…CILL), 278-298 (ISGF…FAIF), 304-324 (VAVG…LFMV), and 354-374 (VARP…FILT). The segment at 498–518 (MAGQTGSASNGGSGGSLGDAA) is disordered. The next 5 membrane-spanning stretches (helical) occupy residues 716–736 (MVIM…SMIM), 740–760 (MIAS…LIFV), 772–792 (VPFF…IFLL), 817–837 (VIIT…PSGV), and 847–867 (IIIG…PAII).

Belongs to the resistance-nodulation-cell division (RND) (TC 2.A.6) family. MmpL subfamily.

The protein resides in the cell membrane. This is Putative membrane protein YdgH (ydgH) from Bacillus subtilis (strain 168).